Reading from the N-terminus, the 390-residue chain is Probable purine permease 7 (390 aa).

The next 10 helical transmembrane spans lie at 42–62 (WLRV…ATIL), 74–94 (TYVV…FRFF), 110–130 (SPSF…VSAY), 131–151 (AYLS…LILA), 169–189 (FTPL…LLVV), 205–225 (VIGF…LSLI), 244–264 (LAIY…FASG), 286–306 (TLAS…GLIF), 312–332 (FSNS…VIVF), and 341–361 (IFSI…HYLD).

Belongs to the purine permeases (TC 2.A.7.14) family.

It localises to the membrane. This is Probable purine permease 7 (PUP7) from Arabidopsis thaliana (Mouse-ear cress).